Consider the following 400-residue polypeptide: Large envelope protein (400 aa).

Methionine 1 carries the post-translational modification N-acetylmethionine. Disordered stretches follow at residues 1–53, 88–118, and 145–169; these read MGGW…DHWP, VPVA…SHPQ, and GSSS…SRTG. Residue glycine 2 is the site of N-myristoyl glycine; by host attachment. Residues 2-119 are pre-S1; the sequence is GGWSSKPRQG…PPLRDSHPQA (118 aa). Residues 2 to 174 are pre-S; the sequence is GGWSSKPRQG…SSRTGDPAPN (173 aa). At 2–181 the chain is on the virion surface; in external conformation side; that stretch reads GGWSSKPRQG…APNMENTTSG (180 aa). Topologically, residues 2–253 are intravirion; in internal conformation; sequence GGWSSKPRQG…PGYRWMCLRR (252 aa). Tryptophan 4 is a glycosylation site (N-linked (GlcNAc...) asparagine). The span at 96–106 shows a compositional bias: polar residues; sequence STNRQSGRQPT. The tract at residues 120–174 is pre-S2; that stretch reads MQWNSTTFHQALLDPRVRGLYFPAGGSSSGTVNPVPTTASPISSISSRTGDPAPN. The segment covering 155-166 has biased composition (low complexity); sequence PTTASPISSISS. The helical transmembrane segment at 182-202 threads the bilayer; the sequence is FLGPLLVLQAGFFLLTRILTI. The Intravirion; in external conformation portion of the chain corresponds to 203–253; that stretch reads PQSLDSWWTSLNFLGGAPTCPGQNSQSPTSNHSPTSCPPICPGYRWMCLRR. A helical membrane pass occupies residues 254–274; that stretch reads FIIFLFILLLCLIFLLVLLDY. Residues 275–348 are Virion surface-facing; it reads QGMLPVCPLL…GASVRFSWLS (74 aa). Asparagine 320 carries an N-linked (GlcNAc...) asparagine; by host glycan. Residues 349–369 form a helical membrane-spanning segment; the sequence is LLVPFVQWFVGLSPTVWLSVI. Over 370-375 the chain is Intravirion; sequence WMMWYW. Residues 376–398 form a helical membrane-spanning segment; the sequence is GPSLYNILSPFLPLLPIFFCLWV. The Virion surface portion of the chain corresponds to 399 to 400; that stretch reads YI.

The protein belongs to the orthohepadnavirus major surface antigen family. In its internal form (Li-HBsAg), interacts with the capsid protein and with the isoform S. Interacts with host chaperone CANX. As to quaternary structure, associates with host chaperone CANX through its pre-S2 N glycan; this association may be essential for isoform M proper secretion. In terms of assembly, interacts with isoform L. Interacts with the antigens of satellite virus HDV (HDVAgs); this interaction is required for encapsidation of HDV genomic RNA. Isoform M is N-terminally acetylated by host at a ratio of 90%, and N-glycosylated by host at the pre-S2 region. Post-translationally, myristoylated.

Its subcellular location is the virion membrane. The large envelope protein exists in two topological conformations, one which is termed 'external' or Le-HBsAg and the other 'internal' or Li-HBsAg. In its external conformation the protein attaches the virus to cell receptors and thereby initiating infection. This interaction determines the species specificity and liver tropism. This attachment induces virion internalization predominantly through caveolin-mediated endocytosis. The large envelope protein also assures fusion between virion membrane and endosomal membrane. In its internal conformation the protein plays a role in virion morphogenesis and mediates the contact with the nucleocapsid like a matrix protein. Its function is as follows. The middle envelope protein plays an important role in the budding of the virion. It is involved in the induction of budding in a nucleocapsid independent way. In this process the majority of envelope proteins bud to form subviral lipoprotein particles of 22 nm of diameter that do not contain a nucleocapsid. The protein is Large envelope protein of Hepatitis B virus genotype C subtype adr (strain Japan/adr4/1983) (HBV-C).